The primary structure comprises 432 residues: Putative D-alanyl-D-alanine carboxypeptidase (432 aa).

The chain crosses the membrane as a helical; Signal-anchor span at residues 7-25 (ATVLLTFSLSAFAVEYPVL).

This sequence belongs to the peptidase S12 family. YfeW subfamily.

Its subcellular location is the cell inner membrane. It carries out the reaction Preferential cleavage: (Ac)2-L-Lys-D-Ala-|-D-Ala. Also transpeptidation of peptidyl-alanyl moieties that are N-acyl substituents of D-alanine.. This Salmonella schwarzengrund (strain CVM19633) protein is Putative D-alanyl-D-alanine carboxypeptidase.